The sequence spans 572 residues: DNA polymerase (572 aa).

Positions 1–222 (MPRKMYSCDF…LGLDKEVRYA (222 aa)) are 3'-5' exonuclease and strand displacement activities. The segment at 56 to 66 (YFHNLKFDGAF) is interaction with the primer terminal protein. Residues Asp-142 and Asp-166 each coordinate Mg(2+). Residues 223–226 (YRGG) form a DNA-binding; Involved in the formation of a stable complex between TP and phi29 DNA polymerase region. Residues 227–572 (FTWLNDRFKE…VLVDDTFTIK (346 aa)) form an initiation, polymerization and pyrophosphorolytic activities region. Positions 246 and 247 each coordinate Mg(2+). Positions 251, 368, and 380 each coordinate 5-methyl-UTP. The Mg(2+) site is built by Asp-453 and Asp-455. Asp-455 serves as a coordination point for 5-methyl-UTP.

This sequence belongs to the DNA polymerase type-B family. As to quaternary structure, interacts with the primer terminal protein; this interaction allows the initiation of TP-primed DNA replication at both viral DNA ends. Interacts with DNA. The cofactor is Mg(2+).

The enzyme catalyses DNA(n) + a 2'-deoxyribonucleoside 5'-triphosphate = DNA(n+1) + diphosphate. Polymerase responsible for protein-primed viral DNA replication by strand displacement with high processivity and fidelity. To start replication, the DNA polymerase forms a heterodimer with a free primer terminal protein (TP), recognizes the replication origins at both 5' ends of the linear chromosome, and initiates replication using as primer the OH-group of Ser-232 of the TP. This polymerase possesses three enzymatic activities: DNA synthesis (polymerase), primer terminal protein (TP) deoxynucleotidylation, which is the formation of a covalent linkage (phosphoester) between the hydroxyl group of a specific serine residue in TP and 5'-dAMP, a reaction directed by the second T at the 3' end, and 3' to 5' exonuclease activity. Exonuclease activity has a proofreading purpose. In Bacillus subtilis (Bacteriophage PZA), this protein is DNA polymerase (2).